The following is a 206-amino-acid chain: ATP-dependent Clp protease proteolytic subunit (206 aa).

The Nucleophile role is filled by Ser-107. His-132 is a catalytic residue.

This sequence belongs to the peptidase S14 family. In terms of assembly, fourteen ClpP subunits assemble into 2 heptameric rings which stack back to back to give a disk-like structure with a central cavity, resembling the structure of eukaryotic proteasomes.

The protein resides in the cytoplasm. It catalyses the reaction Hydrolysis of proteins to small peptides in the presence of ATP and magnesium. alpha-casein is the usual test substrate. In the absence of ATP, only oligopeptides shorter than five residues are hydrolyzed (such as succinyl-Leu-Tyr-|-NHMec, and Leu-Tyr-Leu-|-Tyr-Trp, in which cleavage of the -Tyr-|-Leu- and -Tyr-|-Trp bonds also occurs).. In terms of biological role, cleaves peptides in various proteins in a process that requires ATP hydrolysis. Has a chymotrypsin-like activity. Plays a major role in the degradation of misfolded proteins. This Idiomarina loihiensis (strain ATCC BAA-735 / DSM 15497 / L2-TR) protein is ATP-dependent Clp protease proteolytic subunit.